Consider the following 594-residue polypeptide: Class I diterpene synthase TPS6, chloroplastic (594 aa).

D330, D334, N474, Q477, and E482 together coordinate Mg(2+). Residues 330–334 (DDFFD) carry the DDXXD motif motif.

It belongs to the terpene synthase family. Mg(2+) serves as cofactor. As to expression, mostly expressed in trichomes of leaves and fruits.

It localises to the plastid. It is found in the chloroplast. The enzyme catalyses peregrinol diphosphate = labd-13(16),14-diene-9-ol + diphosphate. The catalysed reaction is 9alpha-copalyl diphosphate = syn-isopimara-7,15-diene + diphosphate. It participates in secondary metabolite biosynthesis; terpenoid biosynthesis. In terms of biological role, involved in the biosynthesis of labdane-type diterpenoid including cleroda-dienols, and peregrinol lactones and furan derivatives, dopaminergic diterpenoids that can bind to dopamine receptors in the human pituitary gland, have probably ability to lower prolactin levels, and are used to treat menstrual cycle disorders (e.g. premenstrual syndrome and mastodynia). Terpene synthase the catalyzes the conversion of peregrinol diphosphate to labda-13(16),14-dien-9-ol, and of syn-copalyl diphosophate to dehydroabietadiene and syn-isopimara-7,15-diene. This Vitex agnus-castus (Chaste tree) protein is Class I diterpene synthase TPS6, chloroplastic.